The following is a 399-amino-acid chain: Dual-specificity RNA methyltransferase RlmN (399 aa).

The active-site Proton acceptor is the E122. Residues 128–371 (ETDRGTLCVS…VRTPRGRDIL (244 aa)) form the Radical SAM core domain. A disulfide bridge links C135 with C374. [4Fe-4S] cluster is bound by residues C142, C146, and C149. Residues 200-201 (GE), S232, 254-256 (SLH), and N331 each bind S-adenosyl-L-methionine. C374 serves as the catalytic S-methylcysteine intermediate.

Belongs to the radical SAM superfamily. RlmN family. [4Fe-4S] cluster is required as a cofactor.

It is found in the cytoplasm. The enzyme catalyses adenosine(2503) in 23S rRNA + 2 reduced [2Fe-2S]-[ferredoxin] + 2 S-adenosyl-L-methionine = 2-methyladenosine(2503) in 23S rRNA + 5'-deoxyadenosine + L-methionine + 2 oxidized [2Fe-2S]-[ferredoxin] + S-adenosyl-L-homocysteine. It catalyses the reaction adenosine(37) in tRNA + 2 reduced [2Fe-2S]-[ferredoxin] + 2 S-adenosyl-L-methionine = 2-methyladenosine(37) in tRNA + 5'-deoxyadenosine + L-methionine + 2 oxidized [2Fe-2S]-[ferredoxin] + S-adenosyl-L-homocysteine. Functionally, specifically methylates position 2 of adenine 2503 in 23S rRNA and position 2 of adenine 37 in tRNAs. m2A2503 modification seems to play a crucial role in the proofreading step occurring at the peptidyl transferase center and thus would serve to optimize ribosomal fidelity. This is Dual-specificity RNA methyltransferase RlmN from Rhodopseudomonas palustris (strain ATCC BAA-98 / CGA009).